The chain runs to 865 residues: Alanine--tRNA ligase (865 aa).

Residues His554, His558, Cys656, and His660 each coordinate Zn(2+).

Belongs to the class-II aminoacyl-tRNA synthetase family. Zn(2+) serves as cofactor.

The protein localises to the cytoplasm. The enzyme catalyses tRNA(Ala) + L-alanine + ATP = L-alanyl-tRNA(Ala) + AMP + diphosphate. In terms of biological role, catalyzes the attachment of alanine to tRNA(Ala) in a two-step reaction: alanine is first activated by ATP to form Ala-AMP and then transferred to the acceptor end of tRNA(Ala). Also edits incorrectly charged Ser-tRNA(Ala) and Gly-tRNA(Ala) via its editing domain. The polypeptide is Alanine--tRNA ligase (Francisella tularensis subsp. mediasiatica (strain FSC147)).